The chain runs to 327 residues: Endo-1,4-beta-xylanase A (327 aa).

The 323-residue stretch at A1–T323 folds into the GH10 domain. An intrachain disulfide couples C81 to C123. A glycan (N-linked (GlcNAc...) asparagine) is linked at N101. E131 functions as the Proton donor in the catalytic mechanism. The active-site Nucleophile is the E245. An intrachain disulfide couples C273 to C279.

This sequence belongs to the glycosyl hydrolase 10 (cellulase F) family. As to quaternary structure, monomer.

The protein resides in the secreted. The protein localises to the extracellular space. The catalysed reaction is Endohydrolysis of (1-&gt;4)-beta-D-xylosidic linkages in xylans.. The protein operates within glycan degradation; xylan degradation. In terms of biological role, catalyzes the hydrolysis of the internal glycosidic bonds in heteroxylans, releasing mainly xylobiose and xylotriose. Most active on oat-spelt xylan. The chain is Endo-1,4-beta-xylanase A from Fusarium oxysporum f. sp. lycopersici (strain 4287 / CBS 123668 / FGSC 9935 / NRRL 34936) (Fusarium vascular wilt of tomato).